Here is a 234-residue protein sequence, read N- to C-terminus: MAKKGKKIVAAQQKVDADRKYDISEGIDTALQARFAGFDESVDIAVRLGVDPRHADQMVRGSVVLPHGTGKEIKILVFAKGEKEKEALDAGADFVGNDELIEDIKNGWFGFDKAVATPDMMGAVGKIGKLLGPRGLMPNAKTGTVTFDVARAVNDLKAGKIDFRVDKAGIVHAPLGKASFGTEKLQDNMLALLRMLVAMKPATSKGAYMRSLAVSTSMGAGVRLDPLLVKDAVK.

This sequence belongs to the universal ribosomal protein uL1 family. As to quaternary structure, part of the 50S ribosomal subunit.

In terms of biological role, binds directly to 23S rRNA. The L1 stalk is quite mobile in the ribosome, and is involved in E site tRNA release. Functionally, protein L1 is also a translational repressor protein, it controls the translation of the L11 operon by binding to its mRNA. This chain is Large ribosomal subunit protein uL1, found in Desulfosudis oleivorans (strain DSM 6200 / JCM 39069 / Hxd3) (Desulfococcus oleovorans).